Reading from the N-terminus, the 293-residue chain is MTDTTRSLRDCLAPAKLNLFLHITGRRPDGYHALQSVFQLLDWGDRLHFTLRDDGKVSRVTDVPGVPEESDLVVRAASLLKAHAGATLGVDIEIDKRLPMGAGLGGGSSDAATTLLALNRLWRLDLPRTTLQSLAVKLGADVPFFVFGKNAFAEGIGEALQAVELPARWFLVVTPRVHVPTAAIFSEKSLTRDSKPITITDFLAQRGIDAGWPDSFGRNDMQPVVTSKYAEVAKVVEWFYNLTPARMTGSGASVFAAFKSKADAEAAQAKLPAGWNSAVAESMSEHPLFAFAS.

The active site involves K16. P99 to S109 provides a ligand contact to ATP. D141 is a catalytic residue.

This sequence belongs to the GHMP kinase family. IspE subfamily.

It catalyses the reaction 4-CDP-2-C-methyl-D-erythritol + ATP = 4-CDP-2-C-methyl-D-erythritol 2-phosphate + ADP + H(+). It participates in isoprenoid biosynthesis; isopentenyl diphosphate biosynthesis via DXP pathway; isopentenyl diphosphate from 1-deoxy-D-xylulose 5-phosphate: step 3/6. Functionally, catalyzes the phosphorylation of the position 2 hydroxy group of 4-diphosphocytidyl-2C-methyl-D-erythritol. In Burkholderia mallei (strain NCTC 10247), this protein is 4-diphosphocytidyl-2-C-methyl-D-erythritol kinase.